Reading from the N-terminus, the 677-residue chain is Methionine--tRNA ligase (677 aa).

The 'HIGH' region motif lies at 15–25; it reads PYANGSIHLGH. The Zn(2+) site is built by C146, C149, C159, and C162. The short motif at 333–337 is the 'KMSKS' region element; that stretch reads KMSKS. K336 serves as a coordination point for ATP. Positions 575 to 677 constitute a tRNA-binding domain; the sequence is DFAKVDLRVA…AGAKPGHQVK (103 aa).

It belongs to the class-I aminoacyl-tRNA synthetase family. MetG type 1 subfamily. In terms of assembly, homodimer. Zn(2+) is required as a cofactor.

The protein resides in the cytoplasm. The catalysed reaction is tRNA(Met) + L-methionine + ATP = L-methionyl-tRNA(Met) + AMP + diphosphate. Is required not only for elongation of protein synthesis but also for the initiation of all mRNA translation through initiator tRNA(fMet) aminoacylation. The sequence is that of Methionine--tRNA ligase from Shigella dysenteriae serotype 1 (strain Sd197).